Here is a 101-residue protein sequence, read N- to C-terminus: Large ribosomal subunit protein uL23 (101 aa).

It belongs to the universal ribosomal protein uL23 family. Part of the 50S ribosomal subunit. Contacts protein L29, and trigger factor when it is bound to the ribosome.

One of the early assembly proteins it binds 23S rRNA. One of the proteins that surrounds the polypeptide exit tunnel on the outside of the ribosome. Forms the main docking site for trigger factor binding to the ribosome. The protein is Large ribosomal subunit protein uL23 of Corynebacterium diphtheriae (strain ATCC 700971 / NCTC 13129 / Biotype gravis).